Here is a 572-residue protein sequence, read N- to C-terminus: Cuticlin-6 (572 aa).

An N-terminal signal peptide occupies residues Met-1–Ala-24. The Extracellular portion of the chain corresponds to Asn-25 to Asn-541. The region spanning Glu-47–Leu-216 is the VWFA domain. A glycan (N-linked (GlcNAc...) asparagine) is linked at Asn-78. A ZP domain is found at Ile-233–Gln-479. The chain crosses the membrane as a helical span at residues Leu-542–Phe-562. The Cytoplasmic portion of the chain corresponds to Thr-563–Ala-572.

It localises to the cell membrane. Plays a role in alae formation in dauer larvae probably by regulating cuticle assembly. The chain is Cuticlin-6 from Caenorhabditis elegans.